Consider the following 210-residue polypeptide: MNYAEYFTNRSTDEITRDLIGRPLTFNDGQEKLGGYIVEAEAYMGKLDRAAHSYGGHRSPANEGLYRTGGTIYIYAQRQYFFFDVACQEENEPQGVLVRAIDPAWGIDSMIKNRNGKSGVLITNGPAKMMQAFGIHDKNWNLHFLSDSPFTIDLADNHKRIAQEIIADKRVGINQSDPIWANKKLRYYVAGNPYVSDMKKRDYASNNGWT.

It belongs to the DNA glycosylase MPG family.

The chain is Putative 3-methyladenine DNA glycosylase from Lactobacillus acidophilus (strain ATCC 700396 / NCK56 / N2 / NCFM).